The chain runs to 360 residues: Homoserine O-succinyltransferase (360 aa).

The Acyl-thioester intermediate role is filled by Cys-146. Substrate contacts are provided by Lys-167 and Ser-196. His-239 serves as the catalytic Proton acceptor. Glu-241 is a catalytic residue. Arg-253 is a binding site for substrate.

This sequence belongs to the MetA family.

It localises to the cytoplasm. It carries out the reaction L-homoserine + succinyl-CoA = O-succinyl-L-homoserine + CoA. It functions in the pathway amino-acid biosynthesis; L-methionine biosynthesis via de novo pathway; O-succinyl-L-homoserine from L-homoserine: step 1/1. Functionally, transfers a succinyl group from succinyl-CoA to L-homoserine, forming succinyl-L-homoserine. In vitro, can also use glutaryl-CoA as acyl donor. The chain is Homoserine O-succinyltransferase from Thiothrix nivea (strain ATCC 35100 / DSM 5205 / JP2).